The sequence spans 352 residues: tRNA-specific 2-thiouridylase MnmA (352 aa).

Residues 7–14 (GLSGGVDS) and L33 contribute to the ATP site. The active-site Nucleophile is the C94. An intrachain disulfide couples C94 to C193. G119 provides a ligand contact to ATP. Residues 143 to 145 (KDQ) form an interaction with tRNA region. C193 serves as the catalytic Cysteine persulfide intermediate. The tract at residues 298-299 (RY) is interaction with tRNA.

It belongs to the MnmA/TRMU family.

It localises to the cytoplasm. It carries out the reaction S-sulfanyl-L-cysteinyl-[protein] + uridine(34) in tRNA + AH2 + ATP = 2-thiouridine(34) in tRNA + L-cysteinyl-[protein] + A + AMP + diphosphate + H(+). Catalyzes the 2-thiolation of uridine at the wobble position (U34) of tRNA, leading to the formation of s(2)U34. The polypeptide is tRNA-specific 2-thiouridylase MnmA (Microcystis aeruginosa (strain NIES-843 / IAM M-2473)).